The chain runs to 262 residues: Triosephosphate isomerase (262 aa).

Asn-13 to Lys-15 serves as a coordination point for substrate. The Electrophile role is filled by His-103. The Proton acceptor role is filled by Glu-175. Residues Gly-181, Ser-221, and Gly-242–Gly-243 each bind substrate.

It belongs to the triosephosphate isomerase family. As to quaternary structure, homodimer.

The protein localises to the cytoplasm. It catalyses the reaction D-glyceraldehyde 3-phosphate = dihydroxyacetone phosphate. The protein operates within carbohydrate biosynthesis; gluconeogenesis. It participates in carbohydrate degradation; glycolysis; D-glyceraldehyde 3-phosphate from glycerone phosphate: step 1/1. In terms of biological role, involved in the gluconeogenesis. Catalyzes stereospecifically the conversion of dihydroxyacetone phosphate (DHAP) to D-glyceraldehyde-3-phosphate (G3P). The chain is Triosephosphate isomerase from Corynebacterium efficiens (strain DSM 44549 / YS-314 / AJ 12310 / JCM 11189 / NBRC 100395).